The primary structure comprises 294 residues: tRNA-uridine aminocarboxypropyltransferase 1 (294 aa).

The tract at residues 158–185 (DMQNDSSCEPSLKRPKCSQQYDKSKNEG) is disordered. Positions 202 to 205 (DSTW) match the DXTW motif.

The protein belongs to the TDD superfamily. DTWD1 family.

Its subcellular location is the nucleus. The catalysed reaction is a uridine in tRNA + S-adenosyl-L-methionine = a 3-[(3S)-3-amino-3-carboxypropyl]uridine in tRNA + S-methyl-5'-thioadenosine + H(+). Its function is as follows. Catalyzes the formation of 3-(3-amino-3-carboxypropyl)uridine (acp3U) at position 20 in the D-loop of several cytoplasmic tRNAs (acp3U(20)). This Xenopus tropicalis (Western clawed frog) protein is tRNA-uridine aminocarboxypropyltransferase 1.